The sequence spans 228 residues: 6-carboxyhexanoate--CoA ligase (228 aa).

Belongs to the BioW family. As to quaternary structure, homodimer. Requires Mg(2+) as cofactor.

The catalysed reaction is heptanedioate + ATP + CoA = 6-carboxyhexanoyl-CoA + AMP + diphosphate. The protein operates within metabolic intermediate metabolism; pimeloyl-CoA biosynthesis; pimeloyl-CoA from pimelate: step 1/1. Its function is as follows. Catalyzes the transformation of pimelate into pimeloyl-CoA with concomitant hydrolysis of ATP to AMP. The protein is 6-carboxyhexanoate--CoA ligase of Staphylococcus epidermidis (strain ATCC 35984 / DSM 28319 / BCRC 17069 / CCUG 31568 / BM 3577 / RP62A).